The following is a 312-amino-acid chain: Acetyl-coenzyme A carboxylase carboxyl transferase subunit alpha (312 aa).

The 262-residue stretch at 25 to 286 (GDDSAVEILK…GNYIIEKLNE (262 aa)) folds into the CoA carboxyltransferase C-terminal domain.

It belongs to the AccA family. As to quaternary structure, acetyl-CoA carboxylase is a heterohexamer composed of biotin carboxyl carrier protein (AccB), biotin carboxylase (AccC) and two subunits each of ACCase subunit alpha (AccA) and ACCase subunit beta (AccD).

It localises to the cytoplasm. The enzyme catalyses N(6)-carboxybiotinyl-L-lysyl-[protein] + acetyl-CoA = N(6)-biotinyl-L-lysyl-[protein] + malonyl-CoA. Its pathway is lipid metabolism; malonyl-CoA biosynthesis; malonyl-CoA from acetyl-CoA: step 1/1. Its function is as follows. Component of the acetyl coenzyme A carboxylase (ACC) complex. First, biotin carboxylase catalyzes the carboxylation of biotin on its carrier protein (BCCP) and then the CO(2) group is transferred by the carboxyltransferase to acetyl-CoA to form malonyl-CoA. This is Acetyl-coenzyme A carboxylase carboxyl transferase subunit alpha from Campylobacter hominis (strain ATCC BAA-381 / DSM 21671 / CCUG 45161 / LMG 19568 / NCTC 13146 / CH001A).